Reading from the N-terminus, the 618-residue chain is Nuclear RNA export factor 1 (618 aa).

Positions 1–15 (MADEGKSYNEHDDRV) are enriched in basic and acidic residues. Residues 1–113 (MADEGKSYNE…RGGAGTSQDG (113 aa)) form a disordered region. Position 2 is an N-acetylalanine (Ala2). The minor non-specific RNA-binding stretch occupies residues 2–59 (ADEGKSYNEHDDRVSFPQRRKKGRGPFRWKCGVGNRRSGRGGSGIRSSRFEEDDGDVA). Positions 2–117 (ADEGKSYNEH…GTSQDGTTKN (116 aa)) are RNA-binding (RBD). The segment at 2 to 197 (ADEGKSYNEH…IIINSSAPPY (196 aa)) is interaction with ALYREF/THOC4 and LUZP4. Residues 19–28 (QRRKKGRGPF) are compositionally biased toward basic residues. An Asymmetric dimethylarginine; alternate modification is found at Arg41. Arg41 carries the omega-N-methylarginine; alternate modification. Residues 60 to 117 (MNDPQDGPRVRFNPYTTRPNRRRDTWHDRDRIHVTVRRDRAPQERGGAGTSQDGTTKN) are major non-specific RNA-binding. The RNA binding stretch occupies residues 60 to 117 (MNDPQDGPRVRFNPYTTRPNRRRDTWHDRDRIHVTVRRDRAPQERGGAGTSQDGTTKN). The Nuclear localization signal motif lies at 66–99 (GPRVRFNPYTTRPNRRRDTWHDRDRIHVTVRRDR). The segment covering 81-102 (RRDTWHDRDRIHVTVRRDRAPQ) has biased composition (basic and acidic residues). Positions 82–109 (RDTWHDRDRIHVTVRRDRAPQERGGAGT) match the Nuclear export signal motif. In terms of domain architecture, RRM spans 118–197 (WFKITIPYGK…IIINSSAPPY (80 aa)). A 3'-nitrotyrosine modification is found at Tyr125. LRR repeat units follow at residues 265–290 (ELLS…QKAP), 291–314 (NLKI…IKGL), 315–342 (KLEE…TIRE), and 343–370 (RFPK…TMLP). One can recognise an NTF2 domain in the interval 385-535 (LVLHFLQQYY…LCIVNDELFV (151 aa)). A TAP-C domain is found at 564 to 618 (QEQQDMLQAFSTQSGMNLEWSQKCLQDNNWDYTRSAQAFTHLKAKGEIPEVAFMK).

This sequence belongs to the NXF family. As to quaternary structure, heterodimer (via NTF2 domain) with NXT1. The formation of NXF1-NXT1 heterodimers is required for the NXF1-mediated nuclear mRNA export. Forms a complex with RANBP2/NUP358, NXT1 and RANGAP1. Associates with the exon junction complex (EJC). Associates with the transcription/export (TREX) complex. Found in a mRNA complex with UPF3A and UPF3B. Found in a post-splicing complex with RBM8A, UPF1, UPF2, UPF3A, UPF3B and RNPS1. Interacts (via N-terminus) with DHX9 (via N-terminus); this interaction is direct and negatively regulates NXF1-mediated nuclear export of constitutive transport element (CTE)-containing cellular mRNAs. Interacts with FYTTD1/UIF. Interacts with EIF4A3. Interacts with NUP42. Interacts with ALYREF/THOC4. Interacts with CHTOP. Interacts with FRG1 (via N-terminus). Interacts with LUZP4. Interacts with FMR1; the interaction occurs in a mRNA-dependent and polyribosomes-independent manner in the nucleus. Interacts with CPSF6 (via N-terminus); this interaction is direct. Interacts with RBM15. Interacts with RBM15B. Interacts with MCM3AP; this interaction is not mediated by RNA. Interacts with DDX3X (via C-terminus); this interaction may be partly involved in DDX3X nuclear export and in NXF1 localization to stress granules. Interacts with PABPC1/PABP1.

The protein resides in the nucleus. It localises to the nucleoplasm. Its subcellular location is the nucleus speckle. It is found in the nuclear pore complex. The protein localises to the nucleus envelope. The protein resides in the cytoplasm. It localises to the stress granule. In terms of biological role, involved in the nuclear export of mRNA species bearing retroviral constitutive transport elements (CTE) and in the export of mRNA from the nucleus to the cytoplasm (TAP/NFX1 pathway). The NXF1-NXT1 heterodimer is involved in the export of HSP70 mRNA in conjunction with ALYREF/THOC4 and THOC5 components of the TREX complex. ALYREF/THOC4-bound mRNA is thought to be transferred to the NXF1-NXT1 heterodimer for export. Also involved in nuclear export of m6A-containing mRNAs: interaction between SRSF3 and YTHDC1 facilitates m6A-containing mRNA-binding to both SRSF3 and NXF1, promoting mRNA nuclear export. In Rattus norvegicus (Rat), this protein is Nuclear RNA export factor 1 (Nxf1).